Consider the following 311-residue polypeptide: GTP cyclohydrolase MptA (311 aa).

The protein belongs to the GTP cyclohydrolase IV family. In terms of assembly, homodimer. It depends on Fe(2+) as a cofactor.

It carries out the reaction GTP + H2O = 7,8-dihydroneopterin 2',3'-cyclic phosphate + formate + diphosphate + H(+). The protein operates within cofactor biosynthesis; 5,6,7,8-tetrahydromethanopterin biosynthesis. Its function is as follows. Converts GTP to 7,8-dihydro-D-neopterin 2',3'-cyclic phosphate, the first intermediate in the biosynthesis of coenzyme methanopterin. The sequence is that of GTP cyclohydrolase MptA from Methanobrevibacter smithii (strain ATCC 35061 / DSM 861 / OCM 144 / PS).